Consider the following 231-residue polypeptide: Orotidine 5'-phosphate decarboxylase (231 aa).

Substrate-binding positions include Asp-11, Lys-34, 61–70 (DLKLHDIPNT), Thr-117, Arg-179, Gln-188, Gly-208, and Arg-209. Lys-63 serves as the catalytic Proton donor.

Belongs to the OMP decarboxylase family. Type 1 subfamily. As to quaternary structure, homodimer.

The enzyme catalyses orotidine 5'-phosphate + H(+) = UMP + CO2. The protein operates within pyrimidine metabolism; UMP biosynthesis via de novo pathway; UMP from orotate: step 2/2. Functionally, catalyzes the decarboxylation of orotidine 5'-monophosphate (OMP) to uridine 5'-monophosphate (UMP). This chain is Orotidine 5'-phosphate decarboxylase, found in Streptococcus thermophilus (strain ATCC BAA-491 / LMD-9).